A 1354-amino-acid polypeptide reads, in one-letter code: RNA-directed RNA polymerase VP1 (1354 aa).

The catalysed reaction is RNA(n) + a ribonucleoside 5'-triphosphate = RNA(n+1) + diphosphate. In terms of biological role, RNA-directed RNA polymerase that is involved in transcription and genome replication. Following infection, it catalyzes the synthesis of fully conservative plus strands. After core assembly, which consists in recruitment of one capped plus-strand for each genomic segments and polymerase complexes, the polymerase switches mode and catalyzes the synthesis of complementary minus-strands. The sequence is that of RNA-directed RNA polymerase VP1 from Cryphonectria parasitica mycoreovirus 1 (strain 9B21) (CpMYRV-1).